The primary structure comprises 139 residues: Ribonuclease VapC3 (139 aa).

Residues 14 to 121 (EAIVLDTGAF…VATDDYTLQR (108 aa)) form the PINc domain. Asp19 contacts Mg(2+).

It belongs to the PINc/VapC protein family. The cofactor is Mg(2+).

Functionally, toxic component of a type II toxin-antitoxin (TA) system. An RNase. This chain is Ribonuclease VapC3, found in Aeropyrum pernix (strain ATCC 700893 / DSM 11879 / JCM 9820 / NBRC 100138 / K1).